An 880-amino-acid polypeptide reads, in one-letter code: GATOR2 complex protein MIOS-A (880 aa).

WD repeat units follow at residues 60 to 102 (SDTP…NSKC), 113 to 157 (KHAR…TPEV), 185 to 224 (GQND…QKMF), 226 to 264 (NTKA…KPVL), 268 to 309 (EQPK…TPIG), and 399 to 441 (RLRA…KQYA). The C4-type zinc-finger motif lies at 740-786 (VSCNFCGKSISYSCSSVPHQGRGFSQYGVSGSPTKSKFTSCPGCRKP). Cysteine 742, cysteine 745, cysteine 780, cysteine 783, cysteine 793, cysteine 832, cysteine 835, histidine 837, histidine 840, histidine 843, cysteine 854, cysteine 859, and cysteine 863 together coordinate Zn(2+). The segment at 787–868 (LPRCALCLIN…CSCKCMQLDT (82 aa)) adopts an RING-type; atypical zinc-finger fold.

The protein belongs to the WD repeat mio family. As to quaternary structure, component of the GATOR2 subcomplex, composed of MIOS, SEC13, SEH1L, WDR24 and WDR59. The GATOR2 complex interacts with CASTOR1 and CASTOR2; the interaction is negatively regulated by arginine. The GATOR2 complex interacts with SESN1, SESN2 and SESN3; the interaction is negatively regulated by amino acids. Interacts with SAR1; the interaction is direct, disrupted by leucine and mediates the interaction of SAR1 with the GATOR2 complex to negatively regulate the TORC1 signaling upon leucine deprivation.

The protein resides in the lysosome membrane. Its activity is regulated as follows. The GATOR2 complex is negatively regulated by the upstream amino acid sensors CASTOR1 and SESN2, which sequester the GATOR2 complex in absence of amino acids. In the presence of abundant amino acids, GATOR2 is released from CASTOR1 and SESN2 and activated. As a component of the GATOR2 complex, functions as an activator of the amino acid-sensing branch of the mTORC1 signaling pathway. The GATOR2 complex indirectly activates mTORC1 through the inhibition of the GATOR1 subcomplex. GATOR2 probably acts as an E3 ubiquitin-protein ligase toward GATOR1. In the presence of abundant amino acids, the GATOR2 complex mediates ubiquitination of the NPRL2 core component of the GATOR1 complex, leading to GATOR1 inactivation. In the absence of amino acids, GATOR2 is inhibited, activating the GATOR1 complex. Within the GATOR2 complex, MIOS is required to prevent autoubiquitination of WDR24, the catalytic subunit of the complex. The chain is GATOR2 complex protein MIOS-A from Xenopus laevis (African clawed frog).